Here is a 201-residue protein sequence, read N- to C-terminus: Potassium-transporting ATPase KdpC subunit (201 aa).

Residues 12-34 traverse the membrane as a helical segment; it reads LLALTMITGLAYPLAVTGLATVL. The disordered stretch occupies residues 73 to 102; the sequence is TVAPDPADSSKTVSAPYNAANSGGSNLGPT. The segment covering 81–101 has biased composition (polar residues); the sequence is SSKTVSAPYNAANSGGSNLGP.

This sequence belongs to the KdpC family. In terms of assembly, the system is composed of three essential subunits: KdpA, KdpB and KdpC.

It is found in the cell inner membrane. In terms of biological role, part of the high-affinity ATP-driven potassium transport (or Kdp) system, which catalyzes the hydrolysis of ATP coupled with the electrogenic transport of potassium into the cytoplasm. This subunit acts as a catalytic chaperone that increases the ATP-binding affinity of the ATP-hydrolyzing subunit KdpB by the formation of a transient KdpB/KdpC/ATP ternary complex. The protein is Potassium-transporting ATPase KdpC subunit of Rhodopseudomonas palustris (strain ATCC BAA-98 / CGA009).